The primary structure comprises 1104 residues: Lon protease homolog, mitochondrial (1104 aa).

The N-terminal 58 residues, 1-58 (MLPLRAFARLAQRPRLSRPTQLARSSLPRPSPSRPAAHYLALAPAPSTRFLHSSPPVL), are a transit peptide targeting the mitochondrion. Disordered stretches follow at residues 8-144 (ARLA…KEVA) and 275-295 (EGSQ…SEVP). Residues 22-46 (LARSSLPRPSPSRPAAHYLALAPAP) show a composition bias toward low complexity. Basic and acidic residues predominate over residues 80 to 103 (KQDDQVEKPLPDAESSKSAEERAK). Low complexity predominate over residues 104–128 (SQSSKPDIKASSSDSVSSSAPAPGS). The span at 129-139 (ADGGSPPGAGG) shows a compositional bias: gly residues. In terms of domain architecture, Lon N-terminal spans 155–444 (VLAIPITHRP…RALVLLKKEL (290 aa)). Residues 281 to 291 (AKGEGEVKSFE) show a composition bias toward basic and acidic residues. Position 597 to 604 (597 to 604 (GPPGVGKT)) interacts with ATP. In terms of domain architecture, Lon proteolytic spans 895-1082 (SPPAGVSTGL…RQVLHEAFRG (188 aa)). Active-site residues include Ser987 and Lys1030.

This sequence belongs to the peptidase S16 family. In terms of assembly, homohexamer or homoheptamer. Organized in a ring with a central cavity.

It localises to the mitochondrion matrix. It carries out the reaction Hydrolysis of proteins in presence of ATP.. In terms of biological role, ATP-dependent serine protease that mediates the selective degradation of misfolded, unassembled or oxidatively damaged polypeptides as well as certain short-lived regulatory proteins in the mitochondrial matrix. May also have a chaperone function in the assembly of inner membrane protein complexes. Participates in the regulation of mitochondrial gene expression and in the maintenance of the integrity of the mitochondrial genome. Binds to mitochondrial DNA in a site-specific manner. In Cryptococcus neoformans var. neoformans serotype D (strain JEC21 / ATCC MYA-565) (Filobasidiella neoformans), this protein is Lon protease homolog, mitochondrial.